Consider the following 295-residue polypeptide: MDQKQIEEIVRSVMASMGQAAPAPSEAKCATTNCAAPVTSESCALDLGSAEAKAWIGVENPHRADVLTELRRSTVARVCTGRAGPRPRTQALLRFLADHSRSKDTVLKEVPEEWVKAQGLLEVRSEISDKNLYLTRPDMGRRLCAEAVEALKAQCVANPDVQVVISDGLSTDAITVNYEEILPPLMAGLKQAGLKVGTPFFVRYGRVKIEDQIGEILGAKVVILLVGERPGLGQSESLSCYAVYSPRMATTVEADRTCISNIHQGGTPPVEAAAVIVDLAKRMLEQKASGINMTR.

The adenosylcob(III)alamin site is built by valine 207, glutamate 228, and cysteine 258.

It belongs to the EutC family. The basic unit is a heterodimer which dimerizes to form tetramers. The heterotetramers trimerize; 6 large subunits form a core ring with 6 small subunits projecting outwards. Requires adenosylcob(III)alamin as cofactor.

The protein resides in the bacterial microcompartment. The catalysed reaction is ethanolamine = acetaldehyde + NH4(+). It functions in the pathway amine and polyamine degradation; ethanolamine degradation. Functionally, catalyzes the deamination of various vicinal amino-alcohols to oxo compounds. Allows this organism to utilize ethanolamine as the sole source of nitrogen and carbon in the presence of external vitamin B12. In Escherichia coli (strain UTI89 / UPEC), this protein is Ethanolamine ammonia-lyase small subunit.